Here is a 432-residue protein sequence, read N- to C-terminus: Histidine--tRNA ligase (432 aa).

Belongs to the class-II aminoacyl-tRNA synthetase family. As to quaternary structure, homodimer.

The protein localises to the cytoplasm. It carries out the reaction tRNA(His) + L-histidine + ATP = L-histidyl-tRNA(His) + AMP + diphosphate + H(+). This chain is Histidine--tRNA ligase, found in Ralstonia nicotianae (strain ATCC BAA-1114 / GMI1000) (Ralstonia solanacearum).